We begin with the raw amino-acid sequence, 281 residues long: NADPH-dependent 7-cyano-7-deazaguanine reductase (281 aa).

Substrate is bound at residue 88–90 (IES). 90 to 91 (SK) contacts NADPH. Residue Cys189 is the Thioimide intermediate of the active site. Catalysis depends on Asp196, which acts as the Proton donor. Residue 228 to 229 (HE) participates in substrate binding. 257 to 258 (RG) lines the NADPH pocket.

The protein belongs to the GTP cyclohydrolase I family. QueF type 2 subfamily. In terms of assembly, homodimer.

The protein resides in the cytoplasm. It catalyses the reaction 7-aminomethyl-7-carbaguanine + 2 NADP(+) = 7-cyano-7-deazaguanine + 2 NADPH + 3 H(+). The protein operates within tRNA modification; tRNA-queuosine biosynthesis. Functionally, catalyzes the NADPH-dependent reduction of 7-cyano-7-deazaguanine (preQ0) to 7-aminomethyl-7-deazaguanine (preQ1). The chain is NADPH-dependent 7-cyano-7-deazaguanine reductase from Erwinia tasmaniensis (strain DSM 17950 / CFBP 7177 / CIP 109463 / NCPPB 4357 / Et1/99).